A 48-amino-acid polypeptide reads, in one-letter code: DNA gyrase inhibitor YacG (48 aa).

Residues C9, C12, C28, and C32 each contribute to the Zn(2+) site.

The protein belongs to the DNA gyrase inhibitor YacG family. Interacts with GyrB. Zn(2+) is required as a cofactor.

Inhibits all the catalytic activities of DNA gyrase by preventing its interaction with DNA. Acts by binding directly to the C-terminal domain of GyrB, which probably disrupts DNA binding by the gyrase. This is DNA gyrase inhibitor YacG from Wigglesworthia glossinidia brevipalpis.